Reading from the N-terminus, the 347-residue chain is Aspartate-semialdehyde dehydrogenase (347 aa).

Residues 10-13 (TGMV) and 37-38 (RS) contribute to the NADP(+) site. A phosphate-binding site is contributed by arginine 108. Residue cysteine 147 is the Acyl-thioester intermediate of the active site. Position 174 (glutamine 174) interacts with substrate. 177–178 (SG) lines the NADP(+) pocket. Glutamate 200 serves as a coordination point for substrate. Phosphate is bound at residue lysine 203. Position 233 (arginine 233) interacts with substrate. Histidine 240 serves as the catalytic Proton acceptor. A disordered region spans residues 276-299 (APEKPVVVRDEENRPQPRMDRDMD). A compositionally biased stretch (basic and acidic residues) spans 281 to 299 (VVVRDEENRPQPRMDRDMD). 327 to 328 (NT) is a binding site for NADP(+).

The protein belongs to the aspartate-semialdehyde dehydrogenase family. In terms of assembly, homodimer.

It carries out the reaction L-aspartate 4-semialdehyde + phosphate + NADP(+) = 4-phospho-L-aspartate + NADPH + H(+). Its pathway is amino-acid biosynthesis; L-lysine biosynthesis via DAP pathway; (S)-tetrahydrodipicolinate from L-aspartate: step 2/4. The protein operates within amino-acid biosynthesis; L-methionine biosynthesis via de novo pathway; L-homoserine from L-aspartate: step 2/3. It participates in amino-acid biosynthesis; L-threonine biosynthesis; L-threonine from L-aspartate: step 2/5. Its function is as follows. Catalyzes the NADPH-dependent formation of L-aspartate-semialdehyde (L-ASA) by the reductive dephosphorylation of L-aspartyl-4-phosphate. The chain is Aspartate-semialdehyde dehydrogenase from Methanothermobacter thermautotrophicus (strain ATCC 29096 / DSM 1053 / JCM 10044 / NBRC 100330 / Delta H) (Methanobacterium thermoautotrophicum).